We begin with the raw amino-acid sequence, 968 residues long: Probable transport protein MmpL2 (968 aa).

11 consecutive transmembrane segments (helical) span residues 22–42, 204–224, 245–265, 297–317, 328–348, 378–398, 763–783, 787–807, 815–835, 866–886, and 890–910; these read FAVVIVLLWLGFTAFVNLAVP, VIAAMLLVIYRSVITAVLVLI, IFSLSTFATNLLVLMAIAAST, AHVILGSGLTIAGAMYCLSFA, PIAIGMLVAVLAALTLGPAVL, WPGPVLAATCLVASIGLLALP, YDLLIAGVAAISLILIIMMII, VVAAVVIVGTVVLSMGASFGL, ILGIELYWMVLAMSVILLLAV, TGGVVTAAGMVFAVTMSLFVF, and RIIGQIGTTIGLGLLFDTLVV.

The protein belongs to the resistance-nodulation-cell division (RND) (TC 2.A.6) family. MmpL subfamily.

Its subcellular location is the cell membrane. The polypeptide is Probable transport protein MmpL2 (mmpL2) (Mycobacterium tuberculosis (strain CDC 1551 / Oshkosh)).